The chain runs to 654 residues: Neuroendocrine convertase 2 (654 aa).

The signal sequence occupies residues 1–21 (MAAATWSWLLAPFLLLHWASA). Positions 22–121 (GAGGGAGGSG…VQQPGFKRVK (100 aa)) are excised as a propeptide. Residues 158–483 (QWYLKNTGQN…FGVLDAGAMV (326 aa)) enclose the Peptidase S8 domain. Asparagine 189 carries an N-linked (GlcNAc...) asparagine glycan. Active-site charge relay system residues include aspartate 196 and histidine 237. Disulfide bonds link cysteine 254–cysteine 404 and cysteine 346–cysteine 376. Asparagine 312 is a glycosylation site (N-linked (GlcNAc...) asparagine). Serine 412 acts as the Charge relay system in catalysis. Residues 491 to 627 (SVPPRYHCEA…SLVLHGTKEA (137 aa)) enclose the P/Homo B domain. A disulfide bridge links cysteine 498 with cysteine 524. N-linked (GlcNAc...) asparagine glycosylation is present at asparagine 544.

This sequence belongs to the peptidase S8 family. Furin subfamily. In terms of tissue distribution, expressed in the central nervous system (CNS) and midgut endocrine cells of third instar larva (at protein level). In the CNS, expressed in the CA-LP1 and CA-LP2 neurons which innervate the corpus allatum, and in the CC-MS2 neurons which innervate the corpora cardiaca of the ring gland. Also expressed in the CC-MS1, SP3, Tv and Va neurons. Expressed in Akh-producing cells of the corpora cardiaca. In the embryo, restricted to the final stages of embryogenesis where expression is found in anterior sensory structures and in only 168 cells in the brain and ventral nerve cord. After larvae hatch, the sensory structures and most cells in the CNS turn off or substantially reduce expression. In third instar larva, expressed at higher levels in the anterior section than in the posterior section. Little expression is detected in the adult head. In the developing eye, expressed at higher levels in pale-type R7 photoreceptor cells than in yellow-type R7 cells although expression is not seen in all pale-type R7 cells. Also expressed in outer photoreceptor cells.

It is found in the secreted. It carries out the reaction Release of protein hormones and neuropeptides from their precursors, generally by hydrolysis of -Lys-Arg-|- bonds.. In terms of biological role, serine endopeptidase which is involved in the processing of hormone and other protein precursors at sites comprised of pairs of basic amino acid residues. Required during embryonic and larval development, probably by proteolytically processing peptide hormones involved in hatching, larval growth and larval molting. Required for the processing and activation of Akh which maintains normal hemolymph sugar levels. Has been shown in one study to be required for processing of sli into slit N-product and slit C-product in the embryo which is necessary for lateral transverse muscle elongation but has been shown in another study not to be required for sli cleavage. Required for larval hatching. Also required for normal larval wandering behavior which occurs prior to pupariation. Required during pupal development for head eversion, leg and wing disk extension, and abdominal differentiation. Required during eye development for R8 photoreceptor cell specification by regulating processing of ligands required for the BMP and activin signaling pathways. In Drosophila melanogaster (Fruit fly), this protein is Neuroendocrine convertase 2.